The sequence spans 413 residues: Sulfoquinovose isomerase (413 aa).

6-sulfo-beta-D-quinovose contacts are provided by arginine 55, tyrosine 111, asparagine 172, histidine 176, and arginine 238. The active-site Proton donor/acceptor is the histidine 248. 6-sulfo-beta-D-quinovose-binding residues include glutamate 251, glutamine 362, glutamine 379, and histidine 383. The active-site Proton donor/acceptor is histidine 383.

The protein belongs to the N-acylglucosamine 2-epimerase family. Homohexamer.

It carries out the reaction 6-sulfo-beta-D-quinovose = 6-deoxy-6-sulfo-D-fructose. The enzyme catalyses 6-sulfo-beta-D-quinovose = 6-sulfo-D-rhamnose. With respect to regulation, significantly inhibited by Cu(2+), Fe(3+) and Co(2+). Partially inhibited by Mg(2+), Ca(2+) and Mn(2+). Also inhibited by ATP, ADP, dATP, TTP and GTP. Its function is as follows. Catalyzes the isomerization of sulfoquinovose (SQ) to 6-deoxy-6-sulfo-D-fructose (SF). Can also catalyze the interconversion of SQ and sulforhamnose (SR). Has a clear preference for beta-SQ and little-to-no activity on alpha-SQ. In vitro, can also catalyze the interconversion of mannose, fructose and glucose, or lyxose and xylulose, but has extremely low activity with glucose. The polypeptide is Sulfoquinovose isomerase (yihS) (Escherichia coli (strain K12)).